The primary structure comprises 363 residues: Beta-1,3-N-acetylglucosaminyltransferase lunatic fringe (363 aa).

The Cytoplasmic portion of the chain corresponds to M1–K8. The helical; Signal-anchor for type II membrane protein transmembrane segment at L9–P29 threads the bilayer. Residues G30–Y363 lie on the Lumenal side of the membrane. R113 provides a ligand contact to substrate. N151 carries N-linked (GlcNAc...) asparagine glycosylation. 2 disulfide bridges follow: C152–C163 and C181–C244. Substrate is bound at residue D185. Mn(2+) is bound at residue D186. The active site involves D274. A Mn(2+)-binding site is contributed by H298. C348 and C357 are disulfide-bonded.

This sequence belongs to the glycosyltransferase 31 family. It depends on Mn(2+) as a cofactor. Co(2+) serves as cofactor. In terms of processing, a soluble form may be derived from the membrane form by proteolytic processing.

The protein resides in the golgi apparatus membrane. It carries out the reaction 3-O-(alpha-L-fucosyl)-L-threonyl-[EGF-like domain protein] + UDP-N-acetyl-alpha-D-glucosamine = 3-O-(N-acetyl-beta-D-glucosaminyl-(1-&gt;3)-alpha-L-fucosyl)-L-threonyl-[EGF-like domain protein] + UDP + H(+). The catalysed reaction is 3-O-(alpha-L-fucosyl)-L-seryl-[EGF-like domain protein] + UDP-N-acetyl-alpha-D-glucosamine = 3-O-(N-acetyl-beta-D-glucosaminyl-(1-&gt;3)-alpha-L-fucosyl)-L-seryl-[EGF-like domain protein] + UDP + H(+). Its function is as follows. Glycosyltransferase that initiates the elongation of O-linked fucose residues attached to EGF-like repeats in the extracellular domain of Notch molecules. Essential mediator of somite segmentation and patterning. The sequence is that of Beta-1,3-N-acetylglucosaminyltransferase lunatic fringe (LFNG) from Gallus gallus (Chicken).